The following is a 521-amino-acid chain: MSL complex subunit 3 (521 aa).

The region spanning 13-71 (SGEKVLCFEPDPTKARVLYDAKIVDVIVGKDEKGRKIPEYLIHFNGWNRSWDRWAAEDH) is the Tudor-knot domain. Disordered stretches follow at residues 114–166 (KGLP…TRRE) and 298–409 (ATST…PSKE). Positions 139-149 (KDEEISEESDI) are enriched in acidic residues. Positions 150–166 (EEKTEVKEEPELQTRRE) are enriched in basic and acidic residues. Positions 168–517 (EERTITIEIP…CEAHYSTKNP (350 aa)) constitute an MRG domain. The required for the histone acetyltransferase activity of the MSL complex stretch occupies residues 290–440 (FFLPIKESAT…WKLVPDNYPP (151 aa)). 2 positions are modified to phosphoserine: Ser-309 and Ser-311. The segment covering 316-329 (NPSTPQSTESQPTT) has biased composition (low complexity). Phosphoserine is present on residues Ser-367 and Ser-400. A Phosphothreonine modification is found at Thr-405. Residues Ser-407 and Ser-411 each carry the phosphoserine modification.

As to quaternary structure, component of the MSL histone acetyltransferase complex at least composed of the KAT8/MOF, MSL1/hampin, MSL2 and MSL3. Interacts (via the MRG domain) with MSL1 and KAT8/MOF. Expressed in many tissues including liver, pancreas, heart, lung, kidney, skeletal muscle, brain, and placenta, with highest expression in skeletal muscle and heart.

It localises to the nucleus. Its function is as follows. Non-catalytic component of the MSL histone acetyltransferase complex, a multiprotein complex that mediates the majority of histone H4 acetylation at 'Lys-16' (H4K16ac), an epigenetic mark that prevents chromatin compaction. The MSL complex is required for chromosome stability and genome integrity by maintaining homeostatic levels of H4K16ac. The MSL complex is also involved in gene dosage by promoting up-regulation of genes expressed by the X chromosome. X up-regulation is required to compensate for autosomal biallelic expression. The MSL complex also participates in gene dosage compensation by promoting expression of Tsix non-coding RNA. Acts as a histone reader that specifically recognizes and binds histone H4 monomethylated at 'Lys-20' (H4K20Me1) in a DNA-dependent manner and is proposed to be involved in chromosomal targeting of the MSL complex. May play a role X inactivation in females. In Homo sapiens (Human), this protein is MSL complex subunit 3.